Reading from the N-terminus, the 576-residue chain is Potassium-transporting ATPase potassium-binding subunit (576 aa).

The next 12 membrane-spanning stretches (helical) occupy residues 3–23, 68–88, 137–157, 179–199, 267–287, 294–314, 339–359, 369–389, 391–411, 430–450, 495–515, and 537–557; these read IFLDIFSFILFFGILTIISPI, LYALLSFNFLGFLVLFLTLLF, GLALQNFLSAASGIVVALVLI, ILYVLLPVAFFSALFLVSQGV, FEAFLIILIPASLVFTFGYMI, WFLYSVMLFVLMLFMGIQYYF, FGIGGTVLFSSITTATSCGAV, LGGLVPMSLISLGEIIFGGVG, GLYGMIAMVIIAVFVAGLMIG, VVITLVSGITALLLTTLALYT, ITTGLAMLIGRFIPIIAVFYM, and LVFGVWLVFIIIVVGALTFLP.

The protein belongs to the KdpA family. In terms of assembly, the system is composed of three essential subunits: KdpA, KdpB and KdpC.

The protein localises to the cell inner membrane. Part of the high-affinity ATP-driven potassium transport (or Kdp) system, which catalyzes the hydrolysis of ATP coupled with the electrogenic transport of potassium into the cytoplasm. This subunit binds the periplasmic potassium ions and delivers the ions to the membrane domain of KdpB through an intramembrane tunnel. This is Potassium-transporting ATPase potassium-binding subunit from Hydrogenobaculum sp. (strain Y04AAS1).